The primary structure comprises 179 residues: TPD1 protein homolog 1 (179 aa).

The N-terminal stretch at 1–30 is a signal peptide; that stretch reads MRMEHIYKFQHWLFFIGLGVLLSLSLSVKA.

This is TPD1 protein homolog 1 from Arabidopsis thaliana (Mouse-ear cress).